A 110-amino-acid polypeptide reads, in one-letter code: UPF0122 protein RBAM_015800 (110 aa).

The protein belongs to the UPF0122 family.

In terms of biological role, might take part in the signal recognition particle (SRP) pathway. This is inferred from the conservation of its genetic proximity to ftsY/ffh. May be a regulatory protein. In Bacillus velezensis (strain DSM 23117 / BGSC 10A6 / LMG 26770 / FZB42) (Bacillus amyloliquefaciens subsp. plantarum), this protein is UPF0122 protein RBAM_015800.